We begin with the raw amino-acid sequence, 130 residues long: Small ribosomal subunit protein uS11 (130 aa).

The protein belongs to the universal ribosomal protein uS11 family. Part of the 30S ribosomal subunit. Interacts with proteins S7 and S18. Binds to IF-3.

Functionally, located on the platform of the 30S subunit, it bridges several disparate RNA helices of the 16S rRNA. Forms part of the Shine-Dalgarno cleft in the 70S ribosome. The polypeptide is Small ribosomal subunit protein uS11 (Nitrobacter hamburgensis (strain DSM 10229 / NCIMB 13809 / X14)).